The primary structure comprises 120 residues: MVSSKDIIQRRARRVRRRIKMVSGNRLRLSIYRSNQNIYAQIIDDLRGCTLVSASTLDGDLKKSLKSGSDKEAAFAVGKLIAERAKKAGVNEVVFDRGAYVYHGRVKALAEAAREGGLNF.

This sequence belongs to the universal ribosomal protein uL18 family. Part of the 50S ribosomal subunit; part of the 5S rRNA/L5/L18/L25 subcomplex. Contacts the 5S and 23S rRNAs.

In terms of biological role, this is one of the proteins that bind and probably mediate the attachment of the 5S RNA into the large ribosomal subunit, where it forms part of the central protuberance. This is Large ribosomal subunit protein uL18 from Bartonella henselae (strain ATCC 49882 / DSM 28221 / CCUG 30454 / Houston 1) (Rochalimaea henselae).